The sequence spans 115 residues: SOSS complex subunit C homolog (115 aa).

This sequence belongs to the SOSS-C family.

This chain is SOSS complex subunit C homolog, found in Drosophila mojavensis (Fruit fly).